A 1026-amino-acid chain; its full sequence is Multidrug resistance protein MdtC (1026 aa).

11 consecutive transmembrane segments (helical) span residues 15–35 (ILIA…LPVA), 333–353 (EVEE…FLFL), 360–380 (LIPA…MYLC), 387–407 (LSLM…IVVL), 431–451 (VGFT…PLLL), 463–483 (FAVT…TLTP), 528–548 (LVGV…IAIP), 853–873 (LILI…LYES), 897–917 (LFNA…IGIV), 953–973 (PIMM…LSGG), and 984–1004 (ITIV…TPVV).

The protein belongs to the resistance-nodulation-cell division (RND) (TC 2.A.6) family. MdtC subfamily. In terms of assembly, part of a tripartite efflux system composed of MdtA, MdtB and MdtC. MdtC forms a heteromultimer with MdtB.

The protein resides in the cell inner membrane. The chain is Multidrug resistance protein MdtC from Salmonella paratyphi A (strain AKU_12601).